An 89-amino-acid chain; its full sequence is Large ribosomal subunit protein bL27 (89 aa).

Positions 1 to 23 (MAHKKAGGSSRNGRDSESKRLGV) are disordered.

Belongs to the bacterial ribosomal protein bL27 family.

This is Large ribosomal subunit protein bL27 from Rhizobium meliloti (strain 1021) (Ensifer meliloti).